A 359-amino-acid chain; its full sequence is MITPLTLATLSKNPILVDFFDPEDGRWNSHVDLGLWSDLYLIAPATANTIGKMAAGIADNLLLTSYLSARCPVFIAPAMDVDMLMHPATQRNLGILKSSGNHIIEPGSGELASGLTGKGRMAEPEEIVREVISFFSKKKITEKPLNGRRVFINAGPTIEPIDPVRFISNYSSGRMGIALADAAAAMGAEVTLVLGPVTLRPSSQDINVIDVRSAAEMKEASVEAFRECDIAILAAAVADFTPLTTSDKKIKRGSGEMVINLRPTEDIAAELGKMKKKNQLLVGFALETDDEITNASSKLKRKNLDMIVLNSLKDPGAGFGHETNRITIIDKSNNIDKFELKTKGEVAADIIRKILTLVH.

This sequence in the N-terminal section; belongs to the HFCD (homo-oligomeric flavin containing Cys decarboxylase) superfamily. It in the C-terminal section; belongs to the PPC synthetase family.

The enzyme catalyses L-cysteine + H(+) = cysteamine + CO2. It carries out the reaction 3-sulfino-L-alanine + H(+) = hypotaurine + CO2. Its activity is regulated as follows. Slightly stimulated in the presence of 1 mM Mg(2+). In terms of biological role, catalyzes the decarboxylation of L-cysteine to cysteamine and of 3-sulfino-L-alanine (cysteine sulfinic acid) to hypotaurine. Also catalyzes the decarboxylation of various amino acids such as L-lysine, L-glutamate, L-asparaginate and L-proline. In vitro, shows highest activity with L-cysteine as substrate. The polypeptide is Cysteine/Cysteine sulfinic acid decarboxylase (Unknown prokaryotic organism).